The following is a 745-amino-acid chain: Polyribonucleotide nucleotidyltransferase (745 aa).

Residues Asp-487 and Asp-493 each coordinate Mg(2+). The KH domain maps to 554-613 (PRIETMQIPTDKIRDVIGTGGKIIREIVEKTGAKINIEDTGVVKIASSDGKAIKAAYNWI). Positions 623–691 (GTIYDGTIVK…ERGKIRLSMK (69 aa)) constitute an S1 motif domain. A disordered region spans residues 695–745 (QETGEDITEKLKAERAERGEPEREERSDRGDRGDRGPRRDRGERRRESSGE). Residues 701–745 (ITEKLKAERAERGEPEREERSDRGDRGDRGPRRDRGERRRESSGE) are compositionally biased toward basic and acidic residues.

The protein belongs to the polyribonucleotide nucleotidyltransferase family. The cofactor is Mg(2+).

Its subcellular location is the cytoplasm. The catalysed reaction is RNA(n+1) + phosphate = RNA(n) + a ribonucleoside 5'-diphosphate. Its function is as follows. Involved in mRNA degradation. Catalyzes the phosphorolysis of single-stranded polyribonucleotides processively in the 3'- to 5'-direction. The chain is Polyribonucleotide nucleotidyltransferase from Methylorubrum populi (strain ATCC BAA-705 / NCIMB 13946 / BJ001) (Methylobacterium populi).